A 318-amino-acid polypeptide reads, in one-letter code: Cis-3-alkyl-4-alkyloxetan-2-one decarboxylase (318 aa).

The AB hydrolase-1 domain occupies 30–275; the sequence is PVVMVHGNPS…ADCGHYILED (246 aa).

This sequence belongs to the AB hydrolase superfamily.

It carries out the reaction a cis-3-alkyl-4-alkyloxetan-2-one = a cis-alkene + CO2. In terms of biological role, involved in olefin biosynthesis. Catalyzes the elimination of carbon dioxide from beta-lactones to form the final olefin product. The S.oneidensis oleABCD genes produce 3,6,9,12,15,19,22,25,28-hentriacontanonaene, which may aid the cells in adapting to a sudden drop in temperature. This Shewanella oneidensis (strain ATCC 700550 / JCM 31522 / CIP 106686 / LMG 19005 / NCIMB 14063 / MR-1) protein is Cis-3-alkyl-4-alkyloxetan-2-one decarboxylase.